Here is a 309-residue protein sequence, read N- to C-terminus: MKKKIVAGAVTLLSVAVLAACGKTSGSDKDIITMKGDTITVSEFYDKVKSNPSAQQVLLNLTIKEVFEKQYGKKVTDKEVEEAYEKSSKAYGDNFARVLAQAGLTEDAYREQIRTNKLVEYAVKKAAEKELTDENYKAAYEAYTPEVTAQIIKVDSEDKAKEVLAAAKAEGADFAQLAKDNSTDGDTKDKGGEIKFDSAATNVPDAVKKAAFGLEANAVSDLVTVRSNQGQASYYIVKLVSKTEKSSKWEDYKDKLKQVILTAKQNNTSFIQSVVAKELKDANIKVKDAAFQNLFSQYTQTNTSSSSSK.

The signal sequence occupies residues 1-20 (MKKKIVAGAVTLLSVAVLAA). Cys21 carries the N-palmitoyl cysteine lipid modification. Cys21 carries the S-diacylglycerol cysteine lipid modification. A PpiC domain is found at 144-241 (TPEVTAQIIK…ASYYIVKLVS (98 aa)).

This sequence belongs to the PrsA family.

The protein localises to the cell membrane. It carries out the reaction [protein]-peptidylproline (omega=180) = [protein]-peptidylproline (omega=0). In terms of biological role, plays a major role in protein secretion by helping the post-translocational extracellular folding of several secreted proteins. The protein is Foldase protein PrsA of Streptococcus gordonii (strain Challis / ATCC 35105 / BCRC 15272 / CH1 / DL1 / V288).